Here is a 249-residue protein sequence, read N- to C-terminus: Dof zinc finger protein DOF4.5 (249 aa).

The Dof-type zinc-finger motif lies at 25-79; it reads RVCARCDSDNTKFCYYNNYCEFQPRYFCKNCRRYWTHGGALRNIPIGGSSRAKRA. The Zn(2+) site is built by cysteine 27, cysteine 30, cysteine 52, and cysteine 55.

The protein localises to the nucleus. Transcription factor that binds specifically to a 5'-AA[AG]G-3' consensus core sequence. In Arabidopsis thaliana (Mouse-ear cress), this protein is Dof zinc finger protein DOF4.5 (DOF4.5).